A 368-amino-acid polypeptide reads, in one-letter code: uncharacterized protein (368 aa).

The signal sequence occupies residues 1-19 (MHVSMIIFVSIFSIKYIMA). N-linked (GlcNAc...) asparagine; by host glycosylation is found at Asn-99, Asn-170, Asn-266, and Asn-295.

This is an uncharacterized protein from Ostreid herpesvirus 1 (isolate France) (OsHV-1).